Consider the following 395-residue polypeptide: F-box/kelch-repeat protein At4g39570 (395 aa).

The span at 1 to 25 (MSSPERKRKRVTSTKNPSVKKKKKI) shows a compositional bias: basic residues. The interval 1-29 (MSSPERKRKRVTSTKNPSVKKKKKISPVP) is disordered. The 47-residue stretch at 29 to 75 (PTPIPSLPDDLLVSIFARVSRLYYPILSLVSKSFRSLLRSPELYETR) folds into the F-box domain. Kelch repeat units follow at residues 150–197 (DIYF…VIDG) and 198–246 (KIYV…RSAY).

This is F-box/kelch-repeat protein At4g39570 from Arabidopsis thaliana (Mouse-ear cress).